Consider the following 170-residue polypeptide: Shikimate kinase (170 aa).

Residue 11–16 coordinates ATP; it reads LSGKST. Serine 15 contacts Mg(2+). Residues aspartate 33, arginine 57, and glycine 79 each contribute to the substrate site. Arginine 119 provides a ligand contact to ATP. Substrate is bound at residue arginine 137.

It belongs to the shikimate kinase family. As to quaternary structure, monomer. It depends on Mg(2+) as a cofactor.

It localises to the cytoplasm. It catalyses the reaction shikimate + ATP = 3-phosphoshikimate + ADP + H(+). Its pathway is metabolic intermediate biosynthesis; chorismate biosynthesis; chorismate from D-erythrose 4-phosphate and phosphoenolpyruvate: step 5/7. Functionally, catalyzes the specific phosphorylation of the 3-hydroxyl group of shikimic acid using ATP as a cosubstrate. In Clostridium botulinum (strain Okra / Type B1), this protein is Shikimate kinase.